The following is a 208-amino-acid chain: 3-demethoxyubiquinol 3-hydroxylase (208 aa).

6 residues coordinate Fe cation: Glu-57, Glu-87, His-90, Glu-139, Glu-171, and His-174.

Belongs to the COQ7 family. Requires Fe cation as cofactor.

The protein localises to the cell membrane. The enzyme catalyses a 5-methoxy-2-methyl-3-(all-trans-polyprenyl)benzene-1,4-diol + AH2 + O2 = a 3-demethylubiquinol + A + H2O. It functions in the pathway cofactor biosynthesis; ubiquinone biosynthesis. Functionally, catalyzes the hydroxylation of 2-nonaprenyl-3-methyl-6-methoxy-1,4-benzoquinol during ubiquinone biosynthesis. The chain is 3-demethoxyubiquinol 3-hydroxylase from Burkholderia pseudomallei (strain 668).